A 319-amino-acid polypeptide reads, in one-letter code: Lambda-crystallin homolog (319 aa).

Ala-2 is modified (N-acetylalanine). Position 3 is a phosphoserine (Ser-3). NAD(+) is bound by residues Leu-16–Ile-17, Asp-36, Glu-97, and Lys-102.

This sequence belongs to the 3-hydroxyacyl-CoA dehydrogenase family. In terms of assembly, homodimer. In terms of tissue distribution, widely expressed, with highest levels in liver. Undetectable in skeletal muscle.

The protein resides in the cytoplasm. It catalyses the reaction L-gulonate + NAD(+) = 3-dehydro-L-gulonate + NADH + H(+). Its activity is regulated as follows. Inhibited by malonate. Functionally, has high L-gulonate 3-dehydrogenase activity. It also exhibits low dehydrogenase activity toward L-3-hydroxybutyrate (HBA) and L-threonate. This Mus musculus (Mouse) protein is Lambda-crystallin homolog (Cryl1).